A 422-amino-acid chain; its full sequence is NADP-dependent malic enzyme (422 aa).

The active-site Proton donor is Y39. K94 acts as the Proton acceptor in catalysis. Residue K94 participates in substrate binding. E136, D137, and D162 together coordinate a divalent metal cation. NADP(+) contacts are provided by residues 195–198, N286, and N318; that span reads AGAA. N318 contributes to the substrate binding site.

Belongs to the malic enzymes family. It depends on Mg(2+) as a cofactor. The cofactor is Mn(2+).

The enzyme catalyses (S)-malate + NADP(+) = pyruvate + CO2 + NADPH. It catalyses the reaction oxaloacetate + H(+) = pyruvate + CO2. This is NADP-dependent malic enzyme from Halomonas elongata (strain ATCC 33173 / DSM 2581 / NBRC 15536 / NCIMB 2198 / 1H9).